Consider the following 203-residue polypeptide: GTP cyclohydrolase-2 (203 aa).

GTP is bound at residue 49–53 (RIHSE). Residues C54, C65, and C67 each contribute to the Zn(2+) site. GTP-binding positions include Q70, 92-94 (EGR), and T114. D126 functions as the Proton acceptor in the catalytic mechanism. The active-site Nucleophile is R128. GTP contacts are provided by T149 and K154.

The protein belongs to the GTP cyclohydrolase II family. The cofactor is Zn(2+).

The catalysed reaction is GTP + 4 H2O = 2,5-diamino-6-hydroxy-4-(5-phosphoribosylamino)-pyrimidine + formate + 2 phosphate + 3 H(+). Its pathway is cofactor biosynthesis; riboflavin biosynthesis; 5-amino-6-(D-ribitylamino)uracil from GTP: step 1/4. In terms of biological role, catalyzes the conversion of GTP to 2,5-diamino-6-ribosylamino-4(3H)-pyrimidinone 5'-phosphate (DARP), formate and pyrophosphate. The polypeptide is GTP cyclohydrolase-2 (Shewanella sp. (strain W3-18-1)).